The primary structure comprises 387 residues: Ferrochelatase (387 aa).

Fe cation-binding residues include His196 and Glu277.

It belongs to the ferrochelatase family.

Its subcellular location is the cytoplasm. It catalyses the reaction heme b + 2 H(+) = protoporphyrin IX + Fe(2+). Its pathway is porphyrin-containing compound metabolism; protoheme biosynthesis; protoheme from protoporphyrin-IX: step 1/1. Its function is as follows. Catalyzes the ferrous insertion into protoporphyrin IX. This chain is Ferrochelatase, found in Synechococcus sp. (strain RCC307).